The chain runs to 353 residues: Photosystem II protein D1 (353 aa).

N-acetylthreonine is present on threonine 2. Phosphothreonine is present on threonine 2. The next 3 helical transmembrane spans lie at 29-46 (YIGWFGVLMIPTLLTATS), 118-133 (HFLLGVACYMGREWEL), and 142-156 (WIAVAYSAPVAAATA). Histidine 118 is a chlorophyll a binding site. Tyrosine 126 lines the pheophytin a pocket. The [CaMn4O5] cluster site is built by aspartate 170 and glutamate 189. A helical transmembrane segment spans residues 197–218 (FHMLGVAGVFGGSLFSAMHGSL). Histidine 198 serves as a coordination point for chlorophyll a. A quinone contacts are provided by residues histidine 215 and 264–265 (SF). Histidine 215 lines the Fe cation pocket. Histidine 272 contributes to the Fe cation binding site. A helical transmembrane segment spans residues 274–288 (FLAAWPVAGIWFTAL). The [CaMn4O5] cluster site is built by histidine 332, glutamate 333, aspartate 342, and alanine 344. Residues 345–353 (AVESISIGG) constitute a propeptide that is removed on maturation.

Belongs to the reaction center PufL/M/PsbA/D family. As to quaternary structure, PSII is composed of 1 copy each of membrane proteins PsbA, PsbB, PsbC, PsbD, PsbE, PsbF, PsbH, PsbI, PsbJ, PsbK, PsbL, PsbM, PsbT, PsbX, PsbY, PsbZ, Psb30/Ycf12, at least 3 peripheral proteins of the oxygen-evolving complex and a large number of cofactors. It forms dimeric complexes. It depends on The D1/D2 heterodimer binds P680, chlorophylls that are the primary electron donor of PSII, and subsequent electron acceptors. It shares a non-heme iron and each subunit binds pheophytin, quinone, additional chlorophylls, carotenoids and lipids. D1 provides most of the ligands for the Mn4-Ca-O5 cluster of the oxygen-evolving complex (OEC). There is also a Cl(-1) ion associated with D1 and D2, which is required for oxygen evolution. The PSII complex binds additional chlorophylls, carotenoids and specific lipids. as a cofactor. Post-translationally, tyr-161 forms a radical intermediate that is referred to as redox-active TyrZ, YZ or Y-Z. C-terminally processed by CTPA; processing is essential to allow assembly of the oxygen-evolving complex and thus photosynthetic growth.

The protein resides in the plastid. It localises to the chloroplast thylakoid membrane. It carries out the reaction 2 a plastoquinone + 4 hnu + 2 H2O = 2 a plastoquinol + O2. In terms of biological role, photosystem II (PSII) is a light-driven water:plastoquinone oxidoreductase that uses light energy to abstract electrons from H(2)O, generating O(2) and a proton gradient subsequently used for ATP formation. It consists of a core antenna complex that captures photons, and an electron transfer chain that converts photonic excitation into a charge separation. The D1/D2 (PsbA/PsbD) reaction center heterodimer binds P680, the primary electron donor of PSII as well as several subsequent electron acceptors. In Pinus contorta (Shore pine), this protein is Photosystem II protein D1.